The primary structure comprises 343 residues: MDENKNKALTAALAQIEKQYGKGSIMRLGDSDVAKDIQVVSTGSLSLDIALGVGGLPRGRIIEIYGPESSGKTTLTLQVIAEMQKLGGTAAFIDAEHALDPQYAQKIGVNVQELLISQPDNGEQALEITDMLVRSGSVDIVVIDSVAALTPRAEIEGEMGEPQMGLQARLMSQALRKLTANIKRTNTTVIFINQIRMKIGVMFGNPETTTGGNALKFYASVRLDIRRTGSIKRGEEIVGNETRVKVVKNKVAPPFKQADFAILYGEGISRESEIIELGVLHKLIEKAGAWYSYNGEKIGQGRDNVRDYLKEHKDLAHEIEQKIRAAVDLAETNNRTVPPSPSE.

66-73 provides a ligand contact to ATP; that stretch reads GPESSGKT.

This sequence belongs to the RecA family.

It is found in the cytoplasm. Functionally, can catalyze the hydrolysis of ATP in the presence of single-stranded DNA, the ATP-dependent uptake of single-stranded DNA by duplex DNA, and the ATP-dependent hybridization of homologous single-stranded DNAs. It interacts with LexA causing its activation and leading to its autocatalytic cleavage. The polypeptide is Protein RecA (Nitrosomonas eutropha (strain DSM 101675 / C91 / Nm57)).